The chain runs to 414 residues: Esterase FrsA (414 aa).

It belongs to the FrsA family.

It catalyses the reaction a carboxylic ester + H2O = an alcohol + a carboxylate + H(+). Its function is as follows. Catalyzes the hydrolysis of esters. In Escherichia coli O81 (strain ED1a), this protein is Esterase FrsA.